The chain runs to 316 residues: Beta-ketoacyl-[acyl-carrier-protein] synthase III 1 (316 aa).

Residues C112 and H243 contribute to the active site. An ACP-binding region spans residues 244-248; sequence QANYR. N273 is a catalytic residue.

It belongs to the thiolase-like superfamily. FabH family. As to quaternary structure, homodimer.

The protein localises to the cytoplasm. It carries out the reaction malonyl-[ACP] + acetyl-CoA + H(+) = 3-oxobutanoyl-[ACP] + CO2 + CoA. It functions in the pathway lipid metabolism; fatty acid biosynthesis. Catalyzes the condensation reaction of fatty acid synthesis by the addition to an acyl acceptor of two carbons from malonyl-ACP. Catalyzes the first condensation reaction which initiates fatty acid synthesis and may therefore play a role in governing the total rate of fatty acid production. Possesses both acetoacetyl-ACP synthase and acetyl transacylase activities. Its substrate specificity determines the biosynthesis of branched-chain and/or straight-chain of fatty acids. This is Beta-ketoacyl-[acyl-carrier-protein] synthase III 1 from Vibrio vulnificus (strain YJ016).